Here is a 533-residue protein sequence, read N- to C-terminus: Calcium/calmodulin-dependent protein kinase type II (533 aa).

Residues 18 to 26 (LGKGAFSVV) and K41 each bind ATP. Catalysis depends on D134, which acts as the Proton acceptor. The residue at position 284 (T284) is a Phosphothreonine; by autocatalysis. 2 stretches are compositionally biased toward polar residues: residues 316 to 345 (TSDSTGSVASNGSTTHDTSQIAGTSSQPTS) and 377 to 391 (PPSTIKESSESSQTI). 2 disordered regions span residues 316-347 (TSDSTGSVASNGSTTHDTSQIAGTSSQPTSPA) and 369-400 (LLNKKEQGPPSTIKESSESSQTIDDNDSEKAQ).

This sequence belongs to the protein kinase superfamily. CAMK Ser/Thr protein kinase family. CaMK subfamily. Dodecamer. Subunits are tightly packed around a central ring-shaped scaffold with extensive contacts between the regulatory segment of one kinase and the catalytic domain of another enabling cooperative activation of a subunit by the adjacent molecule. Interacts with and phosphorylates daf-16; the interaction promotes daf-16 nuclear localization. Interacts with egl-2 and tir-1. Interacts with nsy-1. Requires Mg(2+) as cofactor.

It localises to the cytoplasm. It is found in the cell projection. Its subcellular location is the axon. The protein localises to the perikaryon. The catalysed reaction is L-seryl-[protein] + ATP = O-phospho-L-seryl-[protein] + ADP + H(+). It catalyses the reaction L-threonyl-[protein] + ATP = O-phospho-L-threonyl-[protein] + ADP + H(+). Ca(2+)/calmodulin binding removes an autoinhibitory regulatory segment located C-terminal to the kinase domain. This releases the catalytic activity of the enzyme and makes accessible a regulatory residue Thr-284. Phosphorylation of Thr-284 by another kinase domain within the oligomeric holoenzyme keeps CaMKII active in the absence of Ca(2+)/calmodulin by preventing the rebinding of the regulatory segment to the kinase domain and by increasing the affinity of calmodulin for the enzyme. Can respond to high-frequency Ca(2+) pulses to become Ca(2+) independent. Functionally, role in locomotion and neuronal cell fate specification. Required for the regulation of synaptic density, egg laying, defecation, and meiotic maturation. Required for viability under chronic osmotic stress in which it acts downstream of osr-1. Regulates the synaptic trafficking of glr-1. Bidirectional modulator of neurotransmitter release with negative modulatory effects mainly mediated via slo-1 activation. May suppress the functional response to an internal pacemaker, perhaps by modulating the activity of the IP3 receptor. The polypeptide is Calcium/calmodulin-dependent protein kinase type II (Caenorhabditis briggsae).